Consider the following 273-residue polypeptide: 3-methyl-2-oxobutanoate hydroxymethyltransferase (273 aa).

Mg(2+) contacts are provided by Asp-53 and Asp-92. 3-methyl-2-oxobutanoate is bound by residues Asp-53–Ser-54, Asp-92, and Lys-120. Glu-122 contacts Mg(2+). Glu-189 functions as the Proton acceptor in the catalytic mechanism.

This sequence belongs to the PanB family. In terms of assembly, homodecamer; pentamer of dimers. Requires Mg(2+) as cofactor.

The protein resides in the cytoplasm. The catalysed reaction is 3-methyl-2-oxobutanoate + (6R)-5,10-methylene-5,6,7,8-tetrahydrofolate + H2O = 2-dehydropantoate + (6S)-5,6,7,8-tetrahydrofolate. Its pathway is cofactor biosynthesis; (R)-pantothenate biosynthesis; (R)-pantoate from 3-methyl-2-oxobutanoate: step 1/2. In terms of biological role, catalyzes the reversible reaction in which hydroxymethyl group from 5,10-methylenetetrahydrofolate is transferred onto alpha-ketoisovalerate to form ketopantoate. The protein is 3-methyl-2-oxobutanoate hydroxymethyltransferase of Cupriavidus pinatubonensis (strain JMP 134 / LMG 1197) (Cupriavidus necator (strain JMP 134)).